A 376-amino-acid chain; its full sequence is Glucose-1-phosphate adenylyltransferase (376 aa).

Residues Tyr-101, Gly-166, 181–182 (EK), and Ser-192 contribute to the alpha-D-glucose 1-phosphate site.

Belongs to the bacterial/plant glucose-1-phosphate adenylyltransferase family. Homotetramer.

It carries out the reaction alpha-D-glucose 1-phosphate + ATP + H(+) = ADP-alpha-D-glucose + diphosphate. It functions in the pathway glycan biosynthesis; glycogen biosynthesis. In terms of biological role, involved in the biosynthesis of ADP-glucose, a building block required for the elongation reactions to produce glycogen. Catalyzes the reaction between ATP and alpha-D-glucose 1-phosphate (G1P) to produce pyrophosphate and ADP-Glc. This is Glucose-1-phosphate adenylyltransferase from Bacillus cereus (strain ZK / E33L).